The sequence spans 377 residues: N-acetyldiaminopimelate deacetylase (377 aa).

The active site involves Asp69. Residue Glu128 is the Proton acceptor of the active site.

This sequence belongs to the peptidase M20A family. N-acetyldiaminopimelate deacetylase subfamily.

It carries out the reaction N-acetyl-(2S,6S)-2,6-diaminopimelate + H2O = (2S,6S)-2,6-diaminopimelate + acetate. The protein operates within amino-acid biosynthesis; L-lysine biosynthesis via DAP pathway; LL-2,6-diaminopimelate from (S)-tetrahydrodipicolinate (acetylase route): step 3/3. Catalyzes the conversion of N-acetyl-diaminopimelate to diaminopimelate and acetate. This is N-acetyldiaminopimelate deacetylase from Brevibacillus brevis (strain 47 / JCM 6285 / NBRC 100599).